The sequence spans 413 residues: Tryptophan synthase beta chain (413 aa).

Lysine 106 carries the post-translational modification N6-(pyridoxal phosphate)lysine.

It belongs to the TrpB family. In terms of assembly, tetramer of two alpha and two beta chains. Pyridoxal 5'-phosphate is required as a cofactor.

The enzyme catalyses (1S,2R)-1-C-(indol-3-yl)glycerol 3-phosphate + L-serine = D-glyceraldehyde 3-phosphate + L-tryptophan + H2O. It functions in the pathway amino-acid biosynthesis; L-tryptophan biosynthesis; L-tryptophan from chorismate: step 5/5. Functionally, the beta subunit is responsible for the synthesis of L-tryptophan from indole and L-serine. The sequence is that of Tryptophan synthase beta chain from Methylobacterium radiotolerans (strain ATCC 27329 / DSM 1819 / JCM 2831 / NBRC 15690 / NCIMB 10815 / 0-1).